A 290-amino-acid polypeptide reads, in one-letter code: Nucleotide-binding protein Aave_3603 (290 aa).

13–20 (GMSGSGKS) serves as a coordination point for ATP. 62–65 (DVRS) provides a ligand contact to GTP.

The protein belongs to the RapZ-like family.

Displays ATPase and GTPase activities. This is Nucleotide-binding protein Aave_3603 from Paracidovorax citrulli (strain AAC00-1) (Acidovorax citrulli).